We begin with the raw amino-acid sequence, 227 residues long: Neuromodulin (227 aa).

The disordered stretch occupies residues 1 to 227 (MLCCMRRTKQ…EDPEADQEHA (227 aa)). S-palmitoyl cysteine attachment occurs at residues cysteine 3 and cysteine 4. The segment covering 9-32 (KQVEKNDEDQKIEQDGVKPEDKAH) has biased composition (basic and acidic residues). Residues 31–60 (AHKAATKIQASFRGHITRKKLKGEKKGDAP) enclose the IQ domain. Serine 41 is modified (phosphoserine; by PHK). Over residues 54-84 (EKKGDAPAAEAEAKEKDDAPVADGVEKKEGD) the composition is skewed to basic and acidic residues. The segment covering 85–97 (GSATTDAAPATSP) has biased composition (low complexity). Residues serine 86 and serine 96 each carry the phosphoserine modification. Residues 98–127 (KAEEPSKAGDAPSEEKKGEGDAAPSEEKAG) are compositionally biased toward basic and acidic residues. Residues 128 to 139 (SAETESAAKATT) show a composition bias toward low complexity. At threonine 138 the chain carries Phosphothreonine. Residues serine 142, serine 144, and serine 145 each carry the phosphoserine modification. Positions 146-158 (KAEDGPAKEEPKQ) are enriched in basic and acidic residues. Over residues 159–193 (ADVPAAVTDAAATTPAAEDAATKAAQPPTETAESS) the composition is skewed to low complexity. Threonine 172 is subject to Phosphothreonine. Residues serine 192 and serine 193 each carry the phosphoserine; by CK2 modification. The segment covering 202 to 215 (VDEAKPKESARQDE) has biased composition (basic and acidic residues). Over residues 216-227 (GKEDPEADQEHA) the composition is skewed to acidic residues.

It belongs to the neuromodulin family. As to quaternary structure, identified in a complex containing FGFR4, NCAM1, CDH2, PLCG1, FRS2, SRC, SHC1, GAP43 and CTTN. Interacts (via IQ domain) with calmodulin. Binds calmodulin with a greater affinity in the absence of Ca(2+) than in its presence. Phosphorylated. Phosphorylation of this protein by a protein kinase C is specifically correlated with certain forms of synaptic plasticity. Post-translationally, palmitoylated by ZDHHC3. Palmitoylation is regulated by ARF6 and is essential for plasma membrane association and axonal and dendritic filopodia induction. Deacylated by LYPLA2. In terms of tissue distribution, expressed in the hippocampus (at protein level). Expressed in the dorsal root ganglion and the spinal cord (at protein level).

Its subcellular location is the cell membrane. The protein resides in the cell projection. It localises to the growth cone membrane. The protein localises to the synapse. It is found in the filopodium membrane. Its subcellular location is the perikaryon. The protein resides in the dendrite. It localises to the axon. The protein localises to the cytoplasm. This protein is associated with nerve growth. It is a major component of the motile 'growth cones' that form the tips of elongating axons. Plays a role in axonal and dendritic filopodia induction. This chain is Neuromodulin (Gap43), found in Mus musculus (Mouse).